The primary structure comprises 37 residues: Large ribosomal subunit protein bL36 (37 aa).

Belongs to the bacterial ribosomal protein bL36 family.

This is Large ribosomal subunit protein bL36 from Psychromonas ingrahamii (strain DSM 17664 / CCUG 51855 / 37).